The primary structure comprises 532 residues: Glutamate--cysteine ligase (532 aa).

This sequence belongs to the glutamate--cysteine ligase type 1 family. Type 1 subfamily.

It catalyses the reaction L-cysteine + L-glutamate + ATP = gamma-L-glutamyl-L-cysteine + ADP + phosphate + H(+). Its pathway is sulfur metabolism; glutathione biosynthesis; glutathione from L-cysteine and L-glutamate: step 1/2. In Pseudomonas fluorescens (strain Pf0-1), this protein is Glutamate--cysteine ligase.